A 103-amino-acid polypeptide reads, in one-letter code: Potassium voltage-gated channel subfamily E member 3 (103 aa).

Asparagine 5, asparagine 22, and asparagine 41 each carry an N-linked (GlcNAc...) asparagine glycan. The tract at residues leucine 30–glycine 52 is disordered. Residues serine 57–leucine 77 form a helical membrane-spanning segment. The segment at phenylalanine 68 to tyrosine 79 is interaction with KCNQ1. The Cytoplasmic portion of the chain corresponds to glycine 78–isoleucine 103.

Belongs to the potassium channel KCNE family. In terms of assembly, interacts with KCNB1. Interacts with KCNC2. Associates with KCNC4/Kv3.4. Interacts with KCNQ1; associates with a KCNQ1:KCNE3 stoichiometry of 4:4; produces a current with nearly instantaneous activation with a linear current-voltage relationship and alters membrane raft localization; affects KCNQ1 structure and gating properties.

The protein resides in the cell membrane. It localises to the cytoplasm. The protein localises to the perikaryon. It is found in the cell projection. Its subcellular location is the dendrite. The protein resides in the membrane raft. Ancillary protein that functions as a regulatory subunit of the voltage-gated potassium (Kv) channel complex composed of pore-forming and potassium-conducting alpha subunits and of regulatory beta subunits. KCNE3 beta subunit modulates the gating kinetics and enhances stability of the channel complex. Alters the gating of the delayed rectifier Kv channel containing KCNB1 alpha subunit. Associates with KCNC4/Kv3.4 alpha subunit to form the subthreshold Kv channel in skeletal muscle and to establish the resting membrane potential (RMP) in muscle cells. Association with KCNQ1/KCLQT1 alpha subunit may form the intestinal cAMP-stimulated potassium channel involved in chloride secretion that produces a current with nearly instantaneous activation with a linear current-voltage relationship. This is Potassium voltage-gated channel subfamily E member 3 from Mus musculus (Mouse).